Here is a 99-residue protein sequence, read N- to C-terminus: Plastocyanin (99 aa).

The Plastocyanin-like domain occupies 1–99; it reads LDVLLGGDDG…AGMVGKVTVN (99 aa). 4 residues coordinate Cu cation: histidine 37, cysteine 84, histidine 87, and methionine 92.

This sequence belongs to the plastocyanin family. Cu(2+) is required as a cofactor.

Its subcellular location is the plastid. The protein resides in the chloroplast thylakoid membrane. Participates in electron transfer between P700 and the cytochrome b6-f complex in photosystem I. The sequence is that of Plastocyanin (PETE) from Solanum tuberosum (Potato).